Reading from the N-terminus, the 356-residue chain is 3-dehydroquinate synthase (356 aa).

Residues 106–110 (GVVGD), 130–131 (TS), Lys-143, Lys-152, and 170–173 (FLKT) each bind NAD(+). The Zn(2+) site is built by Glu-185, His-246, and His-263.

This sequence belongs to the sugar phosphate cyclases superfamily. Dehydroquinate synthase family. Requires NAD(+) as cofactor. It depends on Co(2+) as a cofactor. Zn(2+) is required as a cofactor.

Its subcellular location is the cytoplasm. The enzyme catalyses 7-phospho-2-dehydro-3-deoxy-D-arabino-heptonate = 3-dehydroquinate + phosphate. Its pathway is metabolic intermediate biosynthesis; chorismate biosynthesis; chorismate from D-erythrose 4-phosphate and phosphoenolpyruvate: step 2/7. Catalyzes the conversion of 3-deoxy-D-arabino-heptulosonate 7-phosphate (DAHP) to dehydroquinate (DHQ). This Clostridium acetobutylicum (strain ATCC 824 / DSM 792 / JCM 1419 / IAM 19013 / LMG 5710 / NBRC 13948 / NRRL B-527 / VKM B-1787 / 2291 / W) protein is 3-dehydroquinate synthase.